The chain runs to 283 residues: RNase adapter protein RapZ (283 aa).

8-15 contributes to the ATP binding site; that stretch reads GRSGSGKS. 56–59 is a binding site for GTP; that stretch reads DVRN. The tract at residues 266–283 is RNA-binding; the sequence is RARGKNVQSRHRTLEKRK.

Belongs to the RapZ-like family. RapZ subfamily. As to quaternary structure, homotrimer.

In terms of biological role, modulates the synthesis of GlmS, by affecting the processing and stability of the regulatory small RNA GlmZ. When glucosamine-6-phosphate (GlcN6P) concentrations are high in the cell, RapZ binds GlmZ and targets it to cleavage by RNase E. Consequently, GlmZ is inactivated and unable to activate GlmS synthesis. Under low GlcN6P concentrations, RapZ is sequestered and inactivated by an other regulatory small RNA, GlmY, preventing GlmZ degradation and leading to synthesis of GlmS. The chain is RNase adapter protein RapZ from Yersinia enterocolitica serotype O:8 / biotype 1B (strain NCTC 13174 / 8081).